A 351-amino-acid polypeptide reads, in one-letter code: MGTMAGSWAALLGHLVAGNDLSAEDTAWAMDLVMTGEATPARVAAFVVALRAKGETPAEVRGMADAMLSHSRPLEIRRRAVDIVGTGGDRSGSVNISTMASIVVAAAGVPVVKHGNRAASSKCGTADVLEALGVAIDLPPEGVRRCVEDLGIGFCFAPVFHPAMRHAAGPRREIGIPTAFNVLGPLTNPARPSAGLIGCGDQRMAPVMAEVFAARGGSVLLVRGDDGMDEITTTTTTTVWVVQGGTVTEESIDPAEFGIGYSTPAELQGGDAEVNAEVVRRLVAGEAGPVRDAVLLNAAGALAAFEGPGTDLRGRLGADVERVAAAIDSGAAADLLDRWAKRSTEIMRESE.

5-phospho-alpha-D-ribose 1-diphosphate-binding positions include Gly-85, 88 to 89 (GD), Ser-93, 95 to 98 (NIST), 113 to 121 (KHGNRAASS), and Thr-125. Gly-85 is an anthranilate binding site. Ser-97 serves as a coordination point for Mg(2+). An anthranilate-binding site is contributed by Asn-116. Arg-171 contacts anthranilate. Mg(2+) is bound by residues Asp-229 and Glu-230.

It belongs to the anthranilate phosphoribosyltransferase family. In terms of assembly, homodimer. The cofactor is Mg(2+).

It carries out the reaction N-(5-phospho-beta-D-ribosyl)anthranilate + diphosphate = 5-phospho-alpha-D-ribose 1-diphosphate + anthranilate. Its pathway is amino-acid biosynthesis; L-tryptophan biosynthesis; L-tryptophan from chorismate: step 2/5. Its function is as follows. Catalyzes the transfer of the phosphoribosyl group of 5-phosphorylribose-1-pyrophosphate (PRPP) to anthranilate to yield N-(5'-phosphoribosyl)-anthranilate (PRA). This Saccharopolyspora erythraea (strain ATCC 11635 / DSM 40517 / JCM 4748 / NBRC 13426 / NCIMB 8594 / NRRL 2338) protein is Anthranilate phosphoribosyltransferase.